Consider the following 391-residue polypeptide: MTMMFDLTQDLVKEILSRVPITSLGAVRSTCKGWNALSKDRILCKAKPKQQFHQGFMLSDYRLRSMRFNISGTFKENGEEFVNLSVKEIGNFLNKVEISHMYYCGGILLCVTTDTRLVIWNPYLGQIRWIQLKTETMYSTFCLRYDNNKNHKILRFLDNKQGSYEIYDLKSYSWRAFDVIPKWDIDDDGQSASVKGNTYFRTIDETPNLLICFDFTAERFGKLLDPPFQHGWMSLSWVREEKLVALYQHLDTSMIEIWITTKIEPNALSWTSFLKCYIEQLIALDFWFDIDYNNFFIDEEKKLAVVIDKVESEDCKRSNSHINSYIIGDDGYLKKMNSLGNTARSYTAIMLSSCYVSSLVQIDDPIARRRRRERNSKRKEKKRKGTTNNKV.

The F-box domain occupies 2–49 (TMMFDLTQDLVKEILSRVPITSLGAVRSTCKGWNALSKDRILCKAKPK). Kelch repeat units follow at residues 100–143 (HMYY…TFCL) and 144–194 (RYDN…SASV). Over residues 369 to 385 (RRRRERNSKRKEKKRKG) the composition is skewed to basic residues. A disordered region spans residues 369–391 (RRRRERNSKRKEKKRKGTTNNKV).

The sequence is that of F-box/kelch-repeat protein At4g05080 from Arabidopsis thaliana (Mouse-ear cress).